The sequence spans 248 residues: Stage II sporulation protein SA (248 aa).

At 1–3 the chain is on the extracellular side; it reads MVL. The helical transmembrane segment at 4-21 threads the bilayer; the sequence is FFQIMVWCIVAGLGLYVY. The Cytoplasmic segment spans residues 22–41; it reads ATWRFEAKVKEKMSAIRKTW. The chain crosses the membrane as a helical span at residues 42-64; the sequence is YLLFVLGAMVYWTYEPTSLFTHW. The Extracellular segment spans residues 65-67; it reads ERY. Residues 68-87 form a helical membrane-spanning segment; that stretch reads LIVAVSFALIDAFIFLSAYV. Topologically, residues 88 to 248 are cytoplasmic; it reads KKLAGSELET…VLPIEEEGEG (161 aa).

The protein belongs to the SpoIISA toxin family. In terms of assembly, probably forms an oligomer; X-ray data suggests the inactive complex forms a heterotetramer of SpoIISA(2)-SpoIISB(2), which inactivates the toxic activity of SpoIISA.

Its subcellular location is the cell membrane. Toxic component of a type II toxin-antitoxin (TA) system. Its toxic activity is neutralized by cognate antitoxin SpoIISB. Expression in the absence of SpoIISB permits sporulation to stage II, when plasmolysis zones and holes in the peptidoglycan layer are observed, resulting in cell death. Lethal when synthesized during vegetative growth in the absence of SpoIISB. In E.coli both the membrane bound and soluble domain are required in cis for toxin activity. The sequence is that of Stage II sporulation protein SA (spoIISA) from Bacillus subtilis (strain 168).